We begin with the raw amino-acid sequence, 786 residues long: Pentatricopeptide repeat-containing protein At2g22070 (786 aa).

16 PPR repeats span residues 48-78 (SVYLMNNLMNVYSKTGYALHARKLFDEMPLR), 79-109 (TAFSWNTVLSAYSKRGDMDSTCEFFDQLPQR), 110-144 (DSVSWTTMIVGYKNIGQYHKAIRVMGDMVKEGIEP), 145-179 (TQFTLTNVLASVAATRCMETGKKVHSFIVKLGLRG), 180-214 (NVSVSNSLLNMYAKCGDPMMAKFVFDRMVVRDISS), 215-241 (WNAMIALHMQVGQMDLAMAQFEQMAER), 242-276 (DIVTWNSMISGFNQRGYDLRALDIFSKMLRDSLLS), 278-312 (DRFTLASVLSACANLEKLCIGKQIHSHIVTTGFDI), 313-347 (SGIVLNALISMYSRCGGVETARRLIEQRGTKDLKI), 350-376 (FTALLDGYIKLGDMNQAKNIFVSLKDR), 377-411 (DVVAWTAMIVGYEQHGSYGEAINLFRSMVGGGQRP), 412-446 (NSYTLAAMLSVASSLASLSHGKQIHGSAVKSGEIY), 447-477 (SVSVSNALITMYAKAGNITSASRAFDLIRCE), 479-513 (DTVSWTSMIIALAQHGHAEEALELFETMLMEGLRP), 514-548 (DHITYVGVFSACTHAGLVNQGRQYFDMMKDVDKII), and 550-580 (TLSHYACMVDLFGRAGLLQEAQEFIEKMPIE). The tract at residues 585-660 (TWGSLLSACR…EQGFSWIEVK (76 aa)) is type E motif. A type E(+) motif region spans residues 661–691 (HKVHVFGVEDGTHPEKNEIYMTMKKIWDEIK). Positions 692–786 (KMGYVPDTAS…DGFCSCRDYW (95 aa)) are type DYW motif.

The protein belongs to the PPR family. PCMP-H subfamily.

In Arabidopsis thaliana (Mouse-ear cress), this protein is Pentatricopeptide repeat-containing protein At2g22070 (PCMP-H41).